Here is a 325-residue protein sequence, read N- to C-terminus: Diacylglycerol acyltransferase/mycolyltransferase Ag85B (325 aa).

The N-terminal stretch at 1 to 40 is a signal peptide; it reads MTDVSRKIRAWGRRLMIGTAAAVVLPGLVGLAGGAATAGA. Residue 82–83 participates in substrate binding; the sequence is LR. The fibronectin-binding stretch occupies residues 98–108; that stretch reads FEWYYQSGLSI. Residues cysteine 127 and cysteine 132 are joined by a disulfide bond. 2 residues coordinate substrate: serine 166 and aspartate 194. Serine 166 acts as the Nucleophile in catalysis. The active site involves glutamate 270. Substrate is bound by residues 272-275, lysine 279, and 302-304; these read FVRS and HSW. Histidine 302 is a catalytic residue.

The protein belongs to the mycobacterial A85 antigen family.

The protein resides in the secreted. It carries out the reaction 2 alpha,alpha'-trehalose 6-mycolate = alpha,alpha'-trehalose 6,6'-bismycolate + alpha,alpha-trehalose. The enzyme catalyses an acyl-CoA + a 1,2-diacyl-sn-glycerol = a triacyl-sn-glycerol + CoA. Its function is as follows. The antigen 85 proteins (FbpA, FbpB, FbpC) are responsible for the high affinity of mycobacteria for fibronectin, a large adhesive glycoprotein, which facilitates the attachment of M.tuberculosis to murine alveolar macrophages (AMs). They also help to maintain the integrity of the cell wall by catalyzing the transfer of mycolic acids to cell wall arabinogalactan and through the synthesis of alpha,alpha-trehalose dimycolate (TDM, cord factor). They catalyze the transfer of a mycoloyl residue from one molecule of alpha,alpha-trehalose monomycolate (TMM) to another TMM, leading to the formation of TDM. This is Diacylglycerol acyltransferase/mycolyltransferase Ag85B (fbpB) from Mycobacterium tuberculosis (strain ATCC 25177 / H37Ra).